The sequence spans 69 residues: MKAQFAILVISMMLLQLIVQTESGFLGNLWEGIKTALGKRGLRNLDDFQDFLDSDTSDADLRMLRDMFR.

An N-terminal signal peptide occupies residues M1–S23. L37 is modified (leucine amide). Residues G38–R69 constitute a propeptide that is removed on maturation.

It belongs to the non-disulfide-bridged peptide (NDBP) superfamily. Short antimicrobial peptide (group 4) family. Expressed by the venom gland.

Its subcellular location is the secreted. Functionally, probable antimicrobial peptide. Shows low inhibitory activity against herpes simplex virus type 1 (HSV-1). The sequence is that of Antimicrobial peptide Eval36 from Euscorpiops validus (Scorpion).